Here is a 586-residue protein sequence, read N- to C-terminus: CTP synthase (586 aa).

The interval 1–278 is amidoligase domain; sequence MRKHPQTATK…DAFVVRRLNL (278 aa). S20 is a binding site for CTP. Residue S20 participates in UTP binding. ATP is bound by residues 21 to 26 and D78; that span reads SLGKGL. Positions 78 and 152 each coordinate Mg(2+). CTP-binding positions include 159–161, 199–204, and K235; these read DIE and KTKPTQ. Residues 199–204 and K235 contribute to the UTP site; that span reads KTKPTQ. The region spanning 303-551 is the Glutamine amidotransferase type-1 domain; it reads RIALVGKYVE…VGAAIDYKAG (249 aa). G366 provides a ligand contact to L-glutamine. C393 serves as the catalytic Nucleophile; for glutamine hydrolysis. L-glutamine-binding positions include 394 to 397, E416, and R477; that span reads LGLQ. Catalysis depends on residues H524 and E526. The tract at residues 560-586 is disordered; that stretch reads EIPEHTPNGSSHRDGVGQPLPEPASRG.

This sequence belongs to the CTP synthase family. In terms of assembly, homotetramer.

The enzyme catalyses UTP + L-glutamine + ATP + H2O = CTP + L-glutamate + ADP + phosphate + 2 H(+). The catalysed reaction is L-glutamine + H2O = L-glutamate + NH4(+). It carries out the reaction UTP + NH4(+) + ATP = CTP + ADP + phosphate + 2 H(+). It functions in the pathway pyrimidine metabolism; CTP biosynthesis via de novo pathway; CTP from UDP: step 2/2. Allosterically activated by GTP, when glutamine is the substrate; GTP has no effect on the reaction when ammonia is the substrate. The allosteric effector GTP functions by stabilizing the protein conformation that binds the tetrahedral intermediate(s) formed during glutamine hydrolysis. Inhibited by the product CTP, via allosteric rather than competitive inhibition. Functionally, catalyzes the ATP-dependent amination of UTP to CTP with either L-glutamine or ammonia as the source of nitrogen. Regulates intracellular CTP levels through interactions with the four ribonucleotide triphosphates. The protein is CTP synthase of Mycobacterium tuberculosis (strain CDC 1551 / Oshkosh).